Consider the following 196-residue polypeptide: 3-isopropylmalate dehydratase small subunit (196 aa).

Belongs to the LeuD family. LeuD type 1 subfamily. In terms of assembly, heterodimer of LeuC and LeuD.

It carries out the reaction (2R,3S)-3-isopropylmalate = (2S)-2-isopropylmalate. Its pathway is amino-acid biosynthesis; L-leucine biosynthesis; L-leucine from 3-methyl-2-oxobutanoate: step 2/4. Catalyzes the isomerization between 2-isopropylmalate and 3-isopropylmalate, via the formation of 2-isopropylmaleate. In Streptococcus gordonii (strain Challis / ATCC 35105 / BCRC 15272 / CH1 / DL1 / V288), this protein is 3-isopropylmalate dehydratase small subunit.